Consider the following 286-residue polypeptide: Polyamine aminopropyltransferase (286 aa).

Residues 3–240 (DLWYSESHAD…GHWLFGFASK (238 aa)) enclose the PABS domain. Gln32 lines the S-methyl-5'-thioadenosine pocket. His63 and Asp87 together coordinate spermidine. S-methyl-5'-thioadenosine is bound by residues Glu107 and 139 to 140 (DG). The active-site Proton acceptor is the Asp158. Residue 158–161 (DSTD) participates in spermidine binding. S-methyl-5'-thioadenosine is bound at residue Pro165.

Belongs to the spermidine/spermine synthase family. In terms of assembly, homodimer or homotetramer.

Its subcellular location is the cytoplasm. It carries out the reaction S-adenosyl 3-(methylsulfanyl)propylamine + putrescine = S-methyl-5'-thioadenosine + spermidine + H(+). Its pathway is amine and polyamine biosynthesis; spermidine biosynthesis; spermidine from putrescine: step 1/1. Catalyzes the irreversible transfer of a propylamine group from the amino donor S-adenosylmethioninamine (decarboxy-AdoMet) to putrescine (1,4-diaminobutane) to yield spermidine. The polypeptide is Polyamine aminopropyltransferase (Clostridium acetobutylicum (strain ATCC 824 / DSM 792 / JCM 1419 / IAM 19013 / LMG 5710 / NBRC 13948 / NRRL B-527 / VKM B-1787 / 2291 / W)).